The primary structure comprises 588 residues: DNA ligase (588 aa).

An ATP-binding site is contributed by glutamate 248. Catalysis depends on lysine 250, which acts as the N6-AMP-lysine intermediate. ATP contacts are provided by arginine 255, arginine 270, glutamate 300, phenylalanine 341, arginine 418, and lysine 424.

It belongs to the ATP-dependent DNA ligase family. The cofactor is Mg(2+).

It catalyses the reaction ATP + (deoxyribonucleotide)n-3'-hydroxyl + 5'-phospho-(deoxyribonucleotide)m = (deoxyribonucleotide)n+m + AMP + diphosphate.. DNA ligase that seals nicks in double-stranded DNA during DNA replication, DNA recombination and DNA repair. The protein is DNA ligase of Thermoplasma volcanium (strain ATCC 51530 / DSM 4299 / JCM 9571 / NBRC 15438 / GSS1).